The chain runs to 225 residues: Histone H1.5 (225 aa).

The interval 1–23 (MSDVAVAETPAVKTPTKASKATK) is disordered. The residue at position 2 (serine 2) is an N-acetylserine. Residues 9–19 (TPAVKTPTKAS) are compositionally biased toward low complexity. The 77-residue stretch at 37–113 (AHPPFINMIT…GANGRFRLAV (77 aa)) folds into the H15 domain. Over residues 145–156 (KKTVAKKTGDKV) the composition is skewed to basic and acidic residues. The segment at 145 to 225 (KKTVAKKTGD…RKAVGTAPKA (81 aa)) is disordered. Over residues 157–175 (KKVKSPKRIAKPAVKKVTK) the composition is skewed to basic residues. Positions 176–208 (KAAAPTKSAANETAPKKAAATEAAPKKAAVTKA) are enriched in low complexity.

The protein belongs to the histone H1/H5 family.

It localises to the nucleus. The protein resides in the chromosome. In terms of biological role, histones H1 are necessary for the condensation of nucleosome chains into higher-order structures. The polypeptide is Histone H1.5 (hil-5) (Caenorhabditis elegans).